Consider the following 260-residue polypeptide: Global transcriptional regulator CodY (260 aa).

The GAF domain stretch occupies residues 1 to 159 (MPNLLEKTRK…SSTVVGIQLL (159 aa)). The segment at residues 207–226 (ASVIADRIGITRSVIVNALR) is a DNA-binding region (H-T-H motif).

This sequence belongs to the CodY family.

The protein localises to the cytoplasm. DNA-binding global transcriptional regulator which is involved in the adaptive response to starvation and acts by directly or indirectly controlling the expression of numerous genes in response to nutrient availability. During rapid exponential growth, CodY is highly active and represses genes whose products allow adaptation to nutrient depletion. The protein is Global transcriptional regulator CodY of Streptococcus pyogenes serotype M3 (strain SSI-1).